A 187-amino-acid polypeptide reads, in one-letter code: Elongation factor P (187 aa).

Belongs to the elongation factor P family.

The protein resides in the cytoplasm. Its pathway is protein biosynthesis; polypeptide chain elongation. Its function is as follows. Involved in peptide bond synthesis. Stimulates efficient translation and peptide-bond synthesis on native or reconstituted 70S ribosomes in vitro. Probably functions indirectly by altering the affinity of the ribosome for aminoacyl-tRNA, thus increasing their reactivity as acceptors for peptidyl transferase. The chain is Elongation factor P from Tolumonas auensis (strain DSM 9187 / NBRC 110442 / TA 4).